Reading from the N-terminus, the 196-residue chain is UPF0340 protein TTHA0583 (196 aa).

Belongs to the UPF0340 family.

The polypeptide is UPF0340 protein TTHA0583 (Thermus thermophilus (strain ATCC 27634 / DSM 579 / HB8)).